A 184-amino-acid polypeptide reads, in one-letter code: Cathelicidin-related peptide Pt_CRAMP2 (184 aa).

The signal sequence occupies residues 1–22 (MDGFFWKTWLVVAALAIGGTSS). Positions 23 to 150 (LPHKPLTYEE…EDEKDQPRRV (128 aa)) are excised as a propeptide. Intrachain disulfides connect C81–C92 and C103–C120. The span at 125 to 144 (EDEEQNQEEEEEEEKEEDEK) shows a compositional bias: acidic residues. The segment at 125-147 (EDEEQNQEEEEEEEKEEDEKDQP) is disordered.

The protein belongs to the cathelicidin family. Expressed by the venom gland.

Its subcellular location is the secreted. It localises to the target cell membrane. In terms of biological role, potent antimicrobial peptide against most of Gram-negative bacteria, some Gram-positive bacteria (Bacillus) and some fungi (C.albicans, P.pastoris, A.terreus, A.nidulans, and C.globosum). Adopts an amphipathic alpha helical conformation, that may allow to partition into the target membrane. No hemolytic and cytotoxic activities have been observed on mammalian cells. The protein is Cathelicidin-related peptide Pt_CRAMP2 of Pseudonaja textilis (Eastern brown snake).